The primary structure comprises 162 residues: RNA pyrophosphohydrolase (162 aa).

A Nudix hydrolase domain is found at 7 to 149 (EYRPCVGIML…KKEVYKKVIE (143 aa)). Residues 40 to 61 (GGVDEGEELEQAALRELLEEVG) carry the Nudix box motif.

It belongs to the Nudix hydrolase family. RppH subfamily. The cofactor is a divalent metal cation.

In terms of biological role, accelerates the degradation of transcripts by removing pyrophosphate from the 5'-end of triphosphorylated RNA, leading to a more labile monophosphorylated state that can stimulate subsequent ribonuclease cleavage. The sequence is that of RNA pyrophosphohydrolase from Wolbachia pipientis subsp. Culex pipiens (strain wPip).